The chain runs to 222 residues: Chromatin-associated protein SWI6 (222 aa).

Over residues 1 to 15 (MPVIKKEELSQKKDL) the composition is skewed to basic and acidic residues. 2 disordered regions span residues 1–26 (MPVI…GLED) and 77–147 (ETQD…DRQY). Acidic residues predominate over residues 16–26 (ESEEEDSGLED). A Chromo domain is found at 28-87 (YEVEKVIKHRGKGKNIEFLVRWKGYGPEYDTWEPTENVASAEEAVAAYWETQDKTATAPR).

In terms of assembly, interacts with DMT5.

The protein localises to the nucleus. Functionally, recognizes and binds histone H3 tails methylated at 'Lys-9', leading to epigenetic repression. Localizes DMT5 to heterochromatin characterized by trimethylation of histone H3 tails at 'Lys-9'. The sequence is that of Chromatin-associated protein SWI6 from Cryptococcus neoformans var. grubii serotype A (strain H99 / ATCC 208821 / CBS 10515 / FGSC 9487) (Filobasidiella neoformans var. grubii).